Reading from the N-terminus, the 845-residue chain is Protein translocase subunit SecA (845 aa).

ATP-binding positions include Q85, 103-107 (GEGKT), and D492. Residues 787 to 845 (REQVAQGQAEHPETEQDAAAQSNTSAKRQPVRVDKKVGRNDLCPCGSGKKFKNCHGRNA) are disordered. C829, C831, C840, and H841 together coordinate Zn(2+). The segment covering 835–845 (KKFKNCHGRNA) has biased composition (basic residues).

This sequence belongs to the SecA family. In terms of assembly, monomer and homodimer. Part of the essential Sec protein translocation apparatus which comprises SecA, SecYEG and auxiliary proteins SecDF. Other proteins may also be involved. Requires Zn(2+) as cofactor.

The protein localises to the cell membrane. It is found in the cytoplasm. It catalyses the reaction ATP + H2O + cellular proteinSide 1 = ADP + phosphate + cellular proteinSide 2.. In terms of biological role, part of the Sec protein translocase complex. Interacts with the SecYEG preprotein conducting channel. Has a central role in coupling the hydrolysis of ATP to the transfer of proteins into and across the cell membrane, serving as an ATP-driven molecular motor driving the stepwise translocation of polypeptide chains across the membrane. The protein is Protein translocase subunit SecA of Enterococcus faecalis (strain ATCC 700802 / V583).